We begin with the raw amino-acid sequence, 492 residues long: PHO85 cyclin-8 (492 aa).

3 disordered regions span residues 1–32, 143–163, and 223–252; these read MAND…DNDS, SGSG…GTGR, and KVNS…ENES. Positions 8 to 20 are enriched in polar residues; that stretch reads NKSLINDALTRSM. Acidic residues predominate over residues 23–32; sequence FYDDDDDNDS. Phosphoserine is present on S32.

The protein belongs to the cyclin family. PHO80 subfamily. Forms a cyclin-CDK complex with PHO85.

It localises to the cytoplasm. It is found in the nucleus. Its function is as follows. Cyclin partner of the cyclin-dependent kinase (CDK) PHO85. Together with cyclin PCL10, negatively controls glycogen accumulation under favorable growth conditions. Involved in phosphorylation and negative regulation of glycogen synthase GSY2. Also has minor GLC8 kinase activity. The chain is PHO85 cyclin-8 (PCL8) from Saccharomyces cerevisiae (strain ATCC 204508 / S288c) (Baker's yeast).